Consider the following 244-residue polypeptide: MSKLDLNALNELPKVDRILALAETNAELEKLDAEGRVAWALDNLPGEYVLSSSFGIQAAVSLHLVNQIRPDIPVILTDTGYLFPETYRFIDELTDKLKLNLKVYRATESAAWQEARYGKLWEQGVEGIEKYNDINKVEPMNRALKELNAQTWFAGLRREQSGSRANLPVLAIQRGVFKVLPIIDWDNRTIYQYLQKHGLKYHPLWDEGYLSVGDTHTTRKWEPGMSEEETRFFGLKRECGLHEG.

Cysteine 239 (nucleophile; cysteine thiosulfonate intermediate) is an active-site residue.

This sequence belongs to the PAPS reductase family. CysH subfamily.

The protein resides in the cytoplasm. The enzyme catalyses [thioredoxin]-disulfide + sulfite + adenosine 3',5'-bisphosphate + 2 H(+) = [thioredoxin]-dithiol + 3'-phosphoadenylyl sulfate. It functions in the pathway sulfur metabolism; hydrogen sulfide biosynthesis; sulfite from sulfate: step 3/3. Functionally, catalyzes the formation of sulfite from phosphoadenosine 5'-phosphosulfate (PAPS) using thioredoxin as an electron donor. This chain is Phosphoadenosine 5'-phosphosulfate reductase, found in Shigella boydii serotype 4 (strain Sb227).